Reading from the N-terminus, the 240-residue chain is Sugar fermentation stimulation protein homolog (240 aa).

This sequence belongs to the SfsA family.

The chain is Sugar fermentation stimulation protein homolog from Saccharolobus islandicus (strain M.14.25 / Kamchatka #1) (Sulfolobus islandicus).